The sequence spans 405 residues: 3-isopropylmalate dehydrogenase 2, chloroplastic (405 aa).

The N-terminal 33 residues, 1-33, are a transit peptide targeting the chloroplast; it reads MAAALQTNIRTVKVPATFRAVSKQSLAPFRVRC. The residue at position 70 (S70) is a Phosphoserine. Residue 114–129 participates in NAD(+) binding; the sequence is IGGYKWDNNEKHLRPE. 3 residues coordinate substrate: R136, R146, and R174. N234 is a binding site for NAD(+). D264 contacts substrate. D264 contacts Mg(2+). N265 serves as a coordination point for NAD(+). Mg(2+)-binding residues include D288 and D292. 318–334 contributes to the NAD(+) binding site; that stretch reads EPIHGSAPDIAGQDKAN.

This sequence belongs to the isocitrate and isopropylmalate dehydrogenases family. Homodimer. It depends on Mg(2+) as a cofactor. Requires Mn(2+) as cofactor. In terms of tissue distribution, expressed at low levels in seedlings, cotyledons, hypocotyls, flowers, roots, pollen, leaves and stems.

It is found in the plastid. The protein resides in the chloroplast stroma. It catalyses the reaction (2R,3S)-3-isopropylmalate + NAD(+) = 4-methyl-2-oxopentanoate + CO2 + NADH. It participates in amino-acid biosynthesis; L-leucine biosynthesis; L-leucine from 3-methyl-2-oxobutanoate: step 3/4. Regulated by a thiol-based redox modification. Involved in leucine biosynthesis; catalyzes the oxidative decarboxylation step in leucine biosynthesis (primary metabolism). Catalyzes the oxidation of 3-carboxy-2-hydroxy-4-methylpentanoate (3-isopropylmalate, 3-IPM) to 3-carboxy-4-methyl-2-oxopentanoate. The product decarboxylates to 4-methyl-2 oxopentanoate. Required during pollen development and involved in embryo sac development. This is 3-isopropylmalate dehydrogenase 2, chloroplastic from Arabidopsis thaliana (Mouse-ear cress).